Consider the following 237-residue polypeptide: MTNELVYEGKAKRLFKTEEAGVLRVAYKDDATALNGVRKESFAGKGELNNQITSLIFSHLAEAGIESHFIRAISETEQLVKEVSIIPLEVVVRNVMAGSLAKRLGKEEGEQIPNAIVEFYYKDDALDDPFINDDHVLYLEVATTSEMDTIRQAARSINKVLQELFNQMNITLIDFKLEFGRDAAGEILLADEISPDTCRLWDKETNQKLDKDVFRRNIGNLTDVYTEVLNRLKQVQN.

This sequence belongs to the SAICAR synthetase family.

The enzyme catalyses 5-amino-1-(5-phospho-D-ribosyl)imidazole-4-carboxylate + L-aspartate + ATP = (2S)-2-[5-amino-1-(5-phospho-beta-D-ribosyl)imidazole-4-carboxamido]succinate + ADP + phosphate + 2 H(+). It functions in the pathway purine metabolism; IMP biosynthesis via de novo pathway; 5-amino-1-(5-phospho-D-ribosyl)imidazole-4-carboxamide from 5-amino-1-(5-phospho-D-ribosyl)imidazole-4-carboxylate: step 1/2. In Listeria monocytogenes serovar 1/2a (strain ATCC BAA-679 / EGD-e), this protein is Phosphoribosylaminoimidazole-succinocarboxamide synthase.